The primary structure comprises 271 residues: tRNA pseudouridine synthase A (271 aa).

The Nucleophile role is filled by Asp56. Tyr120 is a binding site for substrate.

The protein belongs to the tRNA pseudouridine synthase TruA family. As to quaternary structure, homodimer.

The enzyme catalyses uridine(38/39/40) in tRNA = pseudouridine(38/39/40) in tRNA. Its function is as follows. Formation of pseudouridine at positions 38, 39 and 40 in the anticodon stem and loop of transfer RNAs. In Janthinobacterium sp. (strain Marseille) (Minibacterium massiliensis), this protein is tRNA pseudouridine synthase A.